We begin with the raw amino-acid sequence, 334 residues long: N-acetyl-gamma-glutamyl-phosphate reductase (334 aa).

Cys-154 is an active-site residue.

This sequence belongs to the NAGSA dehydrogenase family. Type 1 subfamily.

It is found in the cytoplasm. It catalyses the reaction N-acetyl-L-glutamate 5-semialdehyde + phosphate + NADP(+) = N-acetyl-L-glutamyl 5-phosphate + NADPH + H(+). Its pathway is amino-acid biosynthesis; L-arginine biosynthesis; N(2)-acetyl-L-ornithine from L-glutamate: step 3/4. Catalyzes the NADPH-dependent reduction of N-acetyl-5-glutamyl phosphate to yield N-acetyl-L-glutamate 5-semialdehyde. This Buchnera aphidicola subsp. Schizaphis graminum (strain Sg) protein is N-acetyl-gamma-glutamyl-phosphate reductase.